The following is a 63-amino-acid chain: Small ribosomal subunit protein eS17 (63 aa).

The protein belongs to the eukaryotic ribosomal protein eS17 family.

This chain is Small ribosomal subunit protein eS17, found in Methanococcus vannielii (strain ATCC 35089 / DSM 1224 / JCM 13029 / OCM 148 / SB).